Here is a 363-residue protein sequence, read N- to C-terminus: Flagellar P-ring protein (363 aa).

An N-terminal signal peptide occupies residues Met-1–Ala-20.

The protein belongs to the FlgI family. The basal body constitutes a major portion of the flagellar organelle and consists of four rings (L,P,S, and M) mounted on a central rod.

Its subcellular location is the periplasm. The protein resides in the bacterial flagellum basal body. Functionally, assembles around the rod to form the L-ring and probably protects the motor/basal body from shearing forces during rotation. This Shewanella baltica (strain OS223) protein is Flagellar P-ring protein.